We begin with the raw amino-acid sequence, 1010 residues long: Outer kinetochore KNL1 complex subunit knl-1 (1010 aa).

9 consecutive repeat copies span residues 85–88, 109–112, 228–231, 255–258, 278–281, 323–326, 346–349, 402–405, and 428–431. Positions 85 to 431 are 9 X 4 AA repeats of M-[D/E]-[I/L/M]-[S/T]; sequence MDISESPACT…LQKEDLMDIS (347 aa). 2 coiled-coil regions span residues 820–915 and 956–988; these read RIVE…GLDK and KALR…KFAQ.

Component of the KNL1 complex composed of knl-1 and kbp-5. Part of the ten-subunit outer kinetochore KMN network that includes the KNL1, MIS12 and NDC80 complexes. Interacts with the protein phosphatase 1 (PP1) catalytic subunit gsp-1; the interaction is direct. Interacts with the protein phosphatase 1 (PP1) catalytic subunit gsp-2; the interaction is direct. Interacts with the MIS12 complex subunits kbp-1, kbp-2 and mis-12. Interacts with the NDC80 complex components ndc-80 and him-10. Interacts with knl-3. Interacts with kbp-3. Interacts with kbp-4. Interacts with kbp-5.

The protein localises to the cytoplasm. Its subcellular location is the cell cortex. It localises to the chromosome. The protein resides in the centromere. It is found in the kinetochore. Acts as a component of the outer kinetochore KNL1 complex that serves as a docking point for spindle assembly checkpoint components and mediates microtubule-kinetochore interactions. Kinetochores, consisting of a centromere-associated inner segment and a microtubule-contacting outer segment, play a crucial role in chromosome segregation by mediating the physical connection between centromeric DNA and spindle microtubules. The outer kinetochore is made up of the ten-subunit KMN network, comprising the MIS12, NDC80 and KNL1 complexes, and auxiliary microtubule-associated components; together they connect the outer kinetochore with the inner kinetochore, bind microtubules, and mediate interactions with mitotic checkpoint proteins that delay anaphase until chromosomes are bioriented on the spindle. Binds the protein phosphatase 1 catalytic subunits gsp-1 and gsp-2, which has a role in delaying formation of load-bearing kinetochore-microtubule attachments. Required for the recruitment of spindle-assembly checkpoint components bub-1 and mdf-1/2 to unattached kinetochores. Binds microtubules which plays a role in silencing of the spindle assembly checkpoint, but not the formation of load-bearing microtubule-kinetochore attachments. Has a role in the correct localization of the spindly-like protein spdl-1 and the RZZ complex that is composed of rod-1, czw-1 and zwl-1 to kinetochores. The protein is Outer kinetochore KNL1 complex subunit knl-1 (knl-1) of Caenorhabditis elegans.